The chain runs to 238 residues: D-aminoacyl-tRNA deacylase (238 aa).

Belongs to the DtdA deacylase family. In terms of assembly, monomer. Zn(2+) serves as cofactor.

The catalysed reaction is a D-aminoacyl-tRNA + H2O = a tRNA + a D-alpha-amino acid + H(+). It catalyses the reaction glycyl-tRNA(Ala) + H2O = tRNA(Ala) + glycine + H(+). It carries out the reaction D-tyrosyl-tRNA(Tyr) + H2O = D-tyrosine + tRNA(Tyr). D-aminoacyl-tRNA deacylase with broad substrate specificity. By recycling D-aminoacyl-tRNA to D-amino acids and free tRNA molecules, this enzyme counteracts the toxicity associated with the formation of D-aminoacyl-tRNA entities in vivo. Catalyzes the hydrolysis of D-tyrosyl-tRNA(Tyr). This chain is D-aminoacyl-tRNA deacylase, found in Saccharolobus solfataricus (strain ATCC 35092 / DSM 1617 / JCM 11322 / P2) (Sulfolobus solfataricus).